A 384-amino-acid chain; its full sequence is S-adenosylmethionine synthase (384 aa).

Histidine 15 is an ATP binding site. Residue aspartate 17 coordinates Mg(2+). Position 43 (glutamate 43) interacts with K(+). Glutamate 56 and glutamine 99 together coordinate L-methionine. The tract at residues 99–109 (QSADINQGVDR) is flexible loop. Residues 164–166 (DAK), 230–231 (RF), aspartate 239, 245–246 (RK), alanine 262, and lysine 266 contribute to the ATP site. Aspartate 239 contacts L-methionine. Residue lysine 270 coordinates L-methionine.

Belongs to the AdoMet synthase family. In terms of assembly, homotetramer; dimer of dimers. It depends on Mg(2+) as a cofactor. The cofactor is K(+).

Its subcellular location is the cytoplasm. It catalyses the reaction L-methionine + ATP + H2O = S-adenosyl-L-methionine + phosphate + diphosphate. It functions in the pathway amino-acid biosynthesis; S-adenosyl-L-methionine biosynthesis; S-adenosyl-L-methionine from L-methionine: step 1/1. Catalyzes the formation of S-adenosylmethionine (AdoMet) from methionine and ATP. The overall synthetic reaction is composed of two sequential steps, AdoMet formation and the subsequent tripolyphosphate hydrolysis which occurs prior to release of AdoMet from the enzyme. This chain is S-adenosylmethionine synthase, found in Haemophilus influenzae (strain 86-028NP).